We begin with the raw amino-acid sequence, 105 residues long: Large ribosomal subunit protein uL24 (105 aa).

The protein belongs to the universal ribosomal protein uL24 family. Part of the 50S ribosomal subunit.

One of two assembly initiator proteins, it binds directly to the 5'-end of the 23S rRNA, where it nucleates assembly of the 50S subunit. In terms of biological role, one of the proteins that surrounds the polypeptide exit tunnel on the outside of the subunit. This chain is Large ribosomal subunit protein uL24, found in Clostridium botulinum (strain ATCC 19397 / Type A).